Consider the following 261-residue polypeptide: Short-chain-enoyl-CoA hydratase (261 aa).

Catalysis depends on glutamate 114, which acts as the Nucleophile. Glutamate 134 serves as the catalytic Proton acceptor.

It belongs to the enoyl-CoA hydratase/isomerase family. Homotetramer.

It carries out the reaction a short-chain (3S)-3-hydroxyacyl-CoA = a short-chain (2E)-enoyl-CoA + H2O. The protein operates within lipid metabolism; butanoate metabolism. Its function is as follows. Catalyzes the reversible hydration of crotonyl-CoA. Can also use hexenoyl-CoA but not higher analogs. This is Short-chain-enoyl-CoA hydratase (crt) from Clostridium acetobutylicum (strain ATCC 824 / DSM 792 / JCM 1419 / IAM 19013 / LMG 5710 / NBRC 13948 / NRRL B-527 / VKM B-1787 / 2291 / W).